Consider the following 192-residue polypeptide: Thymidine kinase (192 aa).

Residues 9 to 16 (SSMNAGKS) and 87 to 90 (DEAQ) contribute to the ATP site. Glutamate 88 functions as the Proton acceptor in the catalytic mechanism. 4 residues coordinate Zn(2+): cysteine 145, cysteine 147, cysteine 182, and histidine 185.

It belongs to the thymidine kinase family. In terms of assembly, homotetramer.

The protein resides in the cytoplasm. It carries out the reaction thymidine + ATP = dTMP + ADP + H(+). The sequence is that of Thymidine kinase from Colwellia psychrerythraea (strain 34H / ATCC BAA-681) (Vibrio psychroerythus).